Reading from the N-terminus, the 715-residue chain is Gelsolin, cytoplasmic (715 aa).

Residues 1 to 124 (MTTELEIQKA…YLIGGVASGF (124 aa)) are actin-severing. The Gelsolin-like 1 repeat unit spans residues 24–75 (FELVPVPKTNHGKFYTGDSYIILKTTALESGRGFEWNLHYWQGKESSQDERG). Residues 72 to 75 (DERG) form an actin-actin interfilament contact point region. 136–145 (KVLTRVKGKR) contributes to the a 1,2-diacyl-sn-glycero-3-phospho-(1D-myo-inositol-4,5-bisphosphate) binding site. Gelsolin-like repeat units follow at residues 147–187 (VRAT…FEKN), 260–306 (LKIT…TERA), and 405–451 (LRKE…NERT). The actin-binding, Ca-sensitive stretch occupies residues 384–715 (AAESKMIDDG…FLGWDKTLWD (332 aa)). 9 residues coordinate Ca(2+): G421, D422, E449, T499, N539, D540, E562, D642, and E665. Gelsolin-like repeat units lie at residues 524 to 564 (CRAV…SEIQ) and 625 to 667 (FIAE…EEKM).

Belongs to the villin/gelsolin family. Predominantly in the body wall muscle, but expression is not restricted to muscle cells.

It localises to the cytoplasm. The protein localises to the cytoskeleton. In terms of biological role, calcium-regulated, actin-modulating protein that binds to the plus (or barbed) ends of actin monomers or filaments, preventing monomer exchange (end-blocking or capping). It can promote the assembly of monomers into filaments (nucleation) as well as sever filaments already formed. This is Gelsolin, cytoplasmic from Halocynthia roretzi (Sea squirt).